Consider the following 304-residue polypeptide: Coenzyme PQQ synthesis protein B (304 aa).

Belongs to the PqqB family.

It functions in the pathway cofactor biosynthesis; pyrroloquinoline quinone biosynthesis. Its function is as follows. May be involved in the transport of PQQ or its precursor to the periplasm. The chain is Coenzyme PQQ synthesis protein B from Azoarcus sp. (strain BH72).